We begin with the raw amino-acid sequence, 151 residues long: Transcriptional repressor NrdR (151 aa).

Residues 3 to 34 (CPFCSHPDTQVVETREAEDGGFIRRRRQCGGC) fold into a zinc finger. An ATP-cone domain is found at 49–139 (PAIVKKDGRR…VYRSFEDVDD (91 aa)).

Belongs to the NrdR family. It depends on Zn(2+) as a cofactor.

Its function is as follows. Negatively regulates transcription of bacterial ribonucleotide reductase nrd genes and operons by binding to NrdR-boxes. The protein is Transcriptional repressor NrdR of Delftia acidovorans (strain DSM 14801 / SPH-1).